The sequence spans 257 residues: Imidazole glycerol phosphate synthase subunit HisF (257 aa).

Catalysis depends on residues Asp-12 and Asp-131.

It belongs to the HisA/HisF family. In terms of assembly, heterodimer of HisH and HisF.

Its subcellular location is the cytoplasm. The catalysed reaction is 5-[(5-phospho-1-deoxy-D-ribulos-1-ylimino)methylamino]-1-(5-phospho-beta-D-ribosyl)imidazole-4-carboxamide + L-glutamine = D-erythro-1-(imidazol-4-yl)glycerol 3-phosphate + 5-amino-1-(5-phospho-beta-D-ribosyl)imidazole-4-carboxamide + L-glutamate + H(+). The protein operates within amino-acid biosynthesis; L-histidine biosynthesis; L-histidine from 5-phospho-alpha-D-ribose 1-diphosphate: step 5/9. Functionally, IGPS catalyzes the conversion of PRFAR and glutamine to IGP, AICAR and glutamate. The HisF subunit catalyzes the cyclization activity that produces IGP and AICAR from PRFAR using the ammonia provided by the HisH subunit. This Burkholderia mallei (strain NCTC 10247) protein is Imidazole glycerol phosphate synthase subunit HisF.